A 263-amino-acid chain; its full sequence is 5'-nucleotidase SurE (263 aa).

Positions 21, 22, 52, and 105 each coordinate a divalent metal cation.

The protein belongs to the SurE nucleotidase family. It depends on a divalent metal cation as a cofactor.

The protein localises to the cytoplasm. It carries out the reaction a ribonucleoside 5'-phosphate + H2O = a ribonucleoside + phosphate. Its function is as follows. Nucleotidase that shows phosphatase activity on nucleoside 5'-monophosphates. This Vibrio cholerae serotype O1 (strain ATCC 39541 / Classical Ogawa 395 / O395) protein is 5'-nucleotidase SurE.